The primary structure comprises 553 residues: Solute carrier family 2, facilitated glucose transporter member 10 (553 aa).

Over 1–15 the chain is Cytoplasmic; it reads MGLRSTTLVLAATSS. The chain crosses the membrane as a helical span at residues 16–36; that stretch reads LLGGLIFGYELGIISGALLML. Over 37 to 48 the chain is Extracellular; the sequence is KTVFQLTCFEQE. A helical transmembrane segment spans residues 49–69; that stretch reads ALVSAVLFGALLASLIGGFII. Over 70–82 the chain is Cytoplasmic; the sequence is DRSGRRTSIMGSN. Residues 83 to 103 form a helical membrane-spanning segment; that stretch reads LVVLAGSIILIATSSFWWLVV. Residues 104-105 lie on the Extracellular side of the membrane; the sequence is GR. A helical membrane pass occupies residues 106–126; that stretch reads VTVGFAISISSMACCIYVSEI. The Cytoplasmic segment spans residues 127–132; the sequence is VRPHQR. A helical membrane pass occupies residues 133-153; the sequence is GTLVSLYETGITVGILISYAM. At 154 to 165 the chain is on the extracellular side; the sequence is NYFLSAVNDGWK. A helical transmembrane segment spans residues 166–186; the sequence is YMFGLAIIPAAFQFIVILFLP. Residues 187 to 240 are Cytoplasmic-facing; sequence SKPHTLNFWEQDSDNGFIELEEAGESGEFKPDTYDKQYTFLDLFRSKDNMRTRT. Residues 241–261 traverse the membrane as a helical segment; that stretch reads LLGLGLVLFQQFTGQPNVLYY. 250–251 contributes to the D-glucose binding site; it reads QQ. Over 262–277 the chain is Extracellular; it reads ASTIFRSVGFQSNSSA. A glycan (N-linked (GlcNAc...) asparagine) is linked at asparagine 274. The chain crosses the membrane as a helical span at residues 278-298; that stretch reads VLASVGLGVVKVASTLIAICF. The Cytoplasmic portion of the chain corresponds to 299–305; it reads ADKAGRR. The helical transmembrane segment at 306 to 326 threads the bilayer; sequence ILLLAGCIVMTIAISGIGIVS. The Extracellular portion of the chain corresponds to 327-413; that stretch reads FMVELDSHRD…PPAGPDSNYA (87 aa). 3 N-linked (GlcNAc...) asparagine glycosylation sites follow: asparagine 344, asparagine 351, and asparagine 400. The helical transmembrane segment at 414–434 threads the bilayer; the sequence is ILNWITLLSMMAFVSAFSIGF. Topologically, residues 435–462 are cytoplasmic; that stretch reads GPMTWLVLSEIYPADIRGRAFAFCNSFN. Tryptophan 439 contributes to the D-glucose binding site. A helical membrane pass occupies residues 463 to 482; sequence WAANLLITLTFLEVIGSIGL. Glycine 483 is a topological domain (extracellular). The helical transmembrane segment at 484-504 threads the bilayer; it reads WTFLLYGGVGLLAIAFIYFFI. Residues 505-553 lie on the Cytoplasmic side of the membrane; it reads PETKGQSLEEIDQQLSSKRISKRRETSKGVRKRPSTGPPYQRVGKSNWT. Positions 522 to 553 are disordered; that stretch reads KRISKRRETSKGVRKRPSTGPPYQRVGKSNWT.

The protein belongs to the major facilitator superfamily. Sugar transporter (TC 2.A.1.1) family. Glucose transporter subfamily.

The protein localises to the endomembrane system. Its subcellular location is the cytoplasm. It localises to the perinuclear region. The catalysed reaction is D-glucose(out) = D-glucose(in). Its function is as follows. Facilitative glucose transporter required for the development of the cardiovascular system. This is Solute carrier family 2, facilitated glucose transporter member 10 from Xenopus laevis (African clawed frog).